The sequence spans 960 residues: UvrABC system protein A (960 aa).

35–42 (GLSGSGKS) serves as a coordination point for ATP. The C4-type zinc-finger motif lies at 270 to 297 (CAHCNVSVPELQPRLFSFNAPFGACPSC). 2 ABC transporter domains span residues 327–605 (FKPE…QASL) and 625–953 (GNGN…WYIK). 657–664 (GVSGSGKS) contributes to the ATP binding site. The segment at 756–782 (CEHCKGDGVITIEMNFLPDVYITCDVC) adopts a C4-type zinc-finger fold.

The protein belongs to the ABC transporter superfamily. UvrA family. Forms a heterotetramer with UvrB during the search for lesions.

The protein localises to the cytoplasm. Functionally, the UvrABC repair system catalyzes the recognition and processing of DNA lesions. UvrA is an ATPase and a DNA-binding protein. A damage recognition complex composed of 2 UvrA and 2 UvrB subunits scans DNA for abnormalities. When the presence of a lesion has been verified by UvrB, the UvrA molecules dissociate. The protein is UvrABC system protein A of Treponema pallidum (strain Nichols).